The primary structure comprises 370 residues: tRNA/tmRNA (uracil-C(5))-methyltransferase (370 aa).

The S-adenosyl-L-methionine site is built by glutamine 190, tyrosine 218, asparagine 223, glutamate 239, and aspartate 299. Cysteine 324 (nucleophile) is an active-site residue. The active-site Proton acceptor is the glutamate 358.

This sequence belongs to the class I-like SAM-binding methyltransferase superfamily. RNA M5U methyltransferase family. TrmA subfamily.

The catalysed reaction is uridine(54) in tRNA + S-adenosyl-L-methionine = 5-methyluridine(54) in tRNA + S-adenosyl-L-homocysteine + H(+). It carries out the reaction uridine(341) in tmRNA + S-adenosyl-L-methionine = 5-methyluridine(341) in tmRNA + S-adenosyl-L-homocysteine + H(+). Its function is as follows. Dual-specificity methyltransferase that catalyzes the formation of 5-methyluridine at position 54 (m5U54) in all tRNAs, and that of position 341 (m5U341) in tmRNA (transfer-mRNA). The polypeptide is tRNA/tmRNA (uracil-C(5))-methyltransferase (Sodalis glossinidius (strain morsitans)).